A 226-amino-acid chain; its full sequence is Spermatogenesis-associated protein 25 (226 aa).

The chain crosses the membrane as a helical span at residues 153-173 (ICILTLAMMIAGIPTVPVPGL).

Belongs to the SPATA25 family. In terms of tissue distribution, expressed strongly in testis, weakly in epididymis and not detected in other tissues.

It localises to the membrane. Functionally, may play a role in spermatogenesis. This is Spermatogenesis-associated protein 25 (Spata25) from Mus musculus (Mouse).